Here is a 130-residue protein sequence, read N- to C-terminus: Small ribosomal subunit protein uS9 (130 aa).

Belongs to the universal ribosomal protein uS9 family.

In Bacillus thuringiensis subsp. konkukian (strain 97-27), this protein is Small ribosomal subunit protein uS9.